The chain runs to 179 residues: Adenine phosphoribosyltransferase (179 aa).

Belongs to the purine/pyrimidine phosphoribosyltransferase family. Homodimer.

The protein localises to the cytoplasm. It carries out the reaction AMP + diphosphate = 5-phospho-alpha-D-ribose 1-diphosphate + adenine. It functions in the pathway purine metabolism; AMP biosynthesis via salvage pathway; AMP from adenine: step 1/1. Functionally, catalyzes a salvage reaction resulting in the formation of AMP, that is energically less costly than de novo synthesis. The sequence is that of Adenine phosphoribosyltransferase from Methylacidiphilum infernorum (isolate V4) (Methylokorus infernorum (strain V4)).